Consider the following 84-residue polypeptide: Toluene-4-monooxygenase system, hydroxylase component subunit gamma (84 aa).

The protein belongs to the TmoB/XamoB family. The alkene monooxygenase multicomponent enzyme system is composed of an electron transfer component and a monooxygenase component interacting with the effector protein TmoD. The electron transfer component is composed of a ferredoxin reductase (TmoF) and a ferredoxin (TmoC), and the monooxygenase component is formed by a heterohexamer (dimer of heterotrimers) of two alpha subunits (TmoA), two beta subunits (TmoE) and two gamma subunits (TmoB).

It catalyses the reaction toluene + NADH + O2 + H(+) = 4-methylphenol + NAD(+) + H2O. It participates in xenobiotic degradation; toluene degradation. Inhibited by Zn(2+) and Cu(2+). Its function is as follows. Component of the toluene-4-monooxygenase multicomponent enzyme system which catalyzes the O2- and NADH-dependent hydroxylation of toluene to form p-cresol. Also able to convert benzene to phenol, catechol, and 1,2,3-trihydroxybenzene by successive hydroxylations. In Ectopseudomonas mendocina (Pseudomonas mendocina), this protein is Toluene-4-monooxygenase system, hydroxylase component subunit gamma.